A 574-amino-acid chain; its full sequence is Peptidyl-prolyl cis-trans isomerase FKBP9 (574 aa).

The N-terminal stretch at 1 to 26 (MAIRARSWRPPPPPLLLLLLWVTGQA) is a signal peptide. 4 PPIase FKBP-type domains span residues 58–146 (GDFV…MDIW), 170–258 (SDFV…LDLH), 282–369 (GDFL…IDFH), and 393–481 (GDYL…LELV). Asn-178, Asn-290, Asn-306, and Asn-401 each carry an N-linked (GlcNAc...) asparagine glycan. 2 consecutive EF-hand domains span residues 492–527 (WNGEVSANLFEEIDKDGDGEVLLEEFSEYIHAQVAS) and 537–572 (DAEMIVKNMFTNQDRNGDGKVTAEEFKLKDQETKHD). Ca(2+) contacts are provided by Asp-505, Asp-507, Asp-509, Glu-511, Glu-516, Asp-550, Asn-552, Asp-554, Lys-556, and Glu-561. The Prevents secretion from ER signature appears at 571 to 574 (HDEL).

In terms of processing, phosphorylated.

The protein resides in the endoplasmic reticulum. It catalyses the reaction [protein]-peptidylproline (omega=180) = [protein]-peptidylproline (omega=0). Its activity is regulated as follows. Inhibited by FK506. Its function is as follows. PPIases accelerate the folding of proteins during protein synthesis. This Bos taurus (Bovine) protein is Peptidyl-prolyl cis-trans isomerase FKBP9 (FKBP9).